Consider the following 115-residue polypeptide: Large ribosomal subunit protein bL20 (115 aa).

It belongs to the bacterial ribosomal protein bL20 family.

In terms of biological role, binds directly to 23S ribosomal RNA and is necessary for the in vitro assembly process of the 50S ribosomal subunit. It is not involved in the protein synthesizing functions of that subunit. In Methylococcus capsulatus (strain ATCC 33009 / NCIMB 11132 / Bath), this protein is Large ribosomal subunit protein bL20.